The sequence spans 297 residues: UDP-N-acetylenolpyruvoylglucosamine reductase (297 aa).

The region spanning 24–189 (KVGGNAEIFF…LKAIFKVNKG (166 aa)) is the FAD-binding PCMH-type domain. R169 is a catalytic residue. S218 functions as the Proton donor in the catalytic mechanism. E289 is an active-site residue.

The protein belongs to the MurB family. The cofactor is FAD.

It is found in the cytoplasm. It catalyses the reaction UDP-N-acetyl-alpha-D-muramate + NADP(+) = UDP-N-acetyl-3-O-(1-carboxyvinyl)-alpha-D-glucosamine + NADPH + H(+). It participates in cell wall biogenesis; peptidoglycan biosynthesis. Its function is as follows. Cell wall formation. This is UDP-N-acetylenolpyruvoylglucosamine reductase from Rickettsia canadensis (strain McKiel).